Here is a 232-residue protein sequence, read N- to C-terminus: Ornithine carbamoyltransferase (232 aa).

Carbamoyl phosphate-binding positions include Gln-15, Arg-39, and 66–69 (HPTQ). L-ornithine is bound by residues Asn-99, Asp-163, and 167–168 (SM). Carbamoyl phosphate-binding positions include 204-207 (HCLP) and Thr-232.

Belongs to the aspartate/ornithine carbamoyltransferase superfamily. OTCase family.

Its subcellular location is the cytoplasm. It carries out the reaction carbamoyl phosphate + L-ornithine = L-citrulline + phosphate + H(+). It participates in amino-acid biosynthesis; L-arginine biosynthesis; L-arginine from L-ornithine and carbamoyl phosphate: step 1/3. Reversibly catalyzes the transfer of the carbamoyl group from carbamoyl phosphate (CP) to the N(epsilon) atom of ornithine (ORN) to produce L-citrulline. The protein is Ornithine carbamoyltransferase (argF) of Neisseria perflava.